Reading from the N-terminus, the 18141-residue chain is MQRQNPNPYQQQNQQHQQVQQFSSQEYSHSSQEQHQEQRISRTEQHVQRSQVTTQRQVQQHHGGSIGGAYVPPSLTHVYAQGDISPPVFEQIFKNARFAQGGNALFEGRLRGNPKPFVTWTRKGAPLLESQKFRMSYNEATGDVSLLINQIGPGDEGEYTCTARNQYGEAICSVYIQPEGAPMPALQPIQNLEKNIYSNGYSYTSIEEEFRVDTFEYRLLREVSFREAITRRSGYEQDSQLSQELDRNQGPAQAPQISQKPRSSKLIEGSDAVFTARVGSNPKPRLTWFHNGQRLVASQKYEISYSSGVATLRVKNATARDGGHYTLLAENLQGCVVSSAVLAVEPAAETAYEPKPVDVMAEQLEAGKALPPAFVKAFGDREITEGRMTRFDCRVTGNPYPEVFWLINGRQVRDDASHKILVNESGSHSLMITNVTRLDAGAVQCLARNKAGEVAIEAQLNVLEKEQVVAPQFVQRFSTMTVREGEPITMSANAIGTPQPRITWQKDGVQISSTAERFVGIDGGATCLEIPRVTANDAGWYQCTAQNIAGSTANRARLYVEVPREQPNYEQRRLNLPRPTKVIEPEPIPGPEIIYLRHVERAKPHLRPGEEDRVYPPPQFIIPLQNVQQTEGGRVHMEARIEPVGDPTMVVEWYLNGRPLAASARATSVFKFGFIALDLLSIMGHDSGEYMCRVTNASGVAESRAILSVVQRPSIEQSSQNPNSLQYINQLEDYSRYQRTESIDEQLNQAPQFIRPLRDLGEFEEGKNVHFEAQVTPVNDPSMRVEWYKDGLPITASSRITAIFNFGYVSLNILHLRAEDAGTYTVRAVNRIGEAISQSSIRVHSRSQVTADLGIPEQQRYIEKVEELEDYRKSQQRRHVQEAAEAIAPPQFKTPIQNQLDLREHAHAHFEARLEPVGDSTMRVEWLKDGQPLEASSRITTYHNFGYVALTIKQLTIYDAGTYTCRAYNAMGQDTTVAQLTVISKNEIVSESQHPGGLQKIQHLEDSSRYGRREEEETYITQAPRFLGPLKGTTKILEGQRAHFEARVEPQSDLGLVIEWYHNGRSITAANRIQTYYDFGYVALDISQVRAEDAGVYLVVARNKLGEAQQQATMIVETRSSIDTSSMHRGLYEKTQNLENKPFVEPQYDIEEISKSKPVFVTPLSDPKPIHDGKNIHLECRLEPMGDPTMRVEWFHNGRPVTVGSRFRTYYDFGFVALDIIKATAADSGEYTVRATNHLGTAHTSACVRVIDHTDVVTETQNEQSLEQIQLLEDSRRRHHQEEDITIMQAPQFTRGLHNIETIEGTNVHLECRLQPVGDPSMRIEWFVNGKPVKTGHRFRPAYEFDYVALDLLGCYAIDSGVYTCQARNQLGEAVTSCSVRIIAKNDLILETQNESGLQKIQYLEDSTRHRRSEFVDEVVNIRPRFLTHPKSLTNTREGGHAHFECKIEPVTDPNLKVEWFKNGRPITVGHRFRPIHDFGYVALDIVHLIAEDSGVYTCRAVNLIGSDETQVELQCRSGEQIVTVTQNEAGLEQIHYLEDRSRYTRREEIDESTKQAPVFTTSLKNVEIKENQRAHFECRLIPVSDPSMRVEWYHNNLPLKSGSRFTETNNFGFVALDIMSTLPEDAGTYTCRAYNAVGEAITSAVAVVHTKKSIYLESQHETALPRLQHLEDGSKRQRISVQDEFVSQAPVFTMPVRDVRVAENQAVHFEARLIPVGDPKLTVEWLRNGQPIEASNRTTTMHDFGYVALNMKYVNPEDSGTYTCRAVNELGQAVTSASLIVQSKTSIQLETQHEAAMHKIHQLEDHSRYQRREEEEYTVTTAPVFVTKLIGPSNLVEGQSAHYECRIEPYPDPNLKVEWFHNGKPLSTGHRFRTTYDFGFAALDILTVYAEDSGEYTCRVTNNLGEAINSIVLNVTSRSSIIHETQHEEALTKIQHLEDTSRFQRKTDEEQFHAERPQFGRPLRNAKVNEGAPVHLEATLIPVNDPTMKVEWYCNGRPIQTGHRFKTTYDFGFVALDILYAHAEDTGTYMCKAKNAIGEAVTTCAVNVTANKTLDLDTLDAQRLEKIRQLETYAPPPKPVVEEKGQKPIFLTPLSNLEHLKEGEHAHLECRVEPINDPNLKIEWFCNGKQLPTGHRYRTTHDFGYVALDILYVYGEDTGTYICKATNQLGEAVNTCNVRVLNRRSMILDTQHPDALEKIQKLESKVPNARTEVGDAPISPPHFTAELRGSTEIYEGQTAHFEAQVAPVHDPNLRIEFYHNGKPLPSASRFHITFDFGYVSLDITHAVAEDAGEYSVRAVNALGQAVSSTNLRVIPRGTIISDTQHPEGLEKIRKLESTAPHQRQEPETPGTRQRPVFTQPLQNIDRINEHQTAHFEARLIPVGDPNLKVEWYRNEKIIEDSSRITKQHDFGFVSLDISHIRKEDEGVYMCRAVNPLGEAVTTASMRVVSEASIQMDTQHPDSISRIHQLEKPLAPRPTEPERLFEKPIFTQLLTGPSELWEGTHAHFEARVVPVGDPSLKFEWFINGVELQMGSRLRTTHDFGFVTLDITAVVPEDAGVYMCRAYNAAGEAVSSTAMKVKTKSNIDGQPLIPESWEAIRLKEAAMNRVPEMFVDSTPQQAPVFTTHLQSYDKLHEGQHVLLEAQVEPRADPNLRIEWFKNGISLTTGSRIRSTFDFGLVTLSINGLRADDSAIYTCKATNQVGEAVSTSSLKIEDRHWLQAESLHPDSLPRIGELEAPKEGRPEAPEPTYETPVFITHLNNIECKESDNVRFECNVEPARDPTMSIEWFYNGQPLQAAAKFKSIYDFGYCALDLTNSYAENSGVYTCKATNSKGSATTSGTLKCTGGKTMFLDTQHPQGEAGLEAVQETEEELANRYTSKTTKPETQYPPPVWTKPLQAEFHLSEAQPIHLEANVEPKEDPNLFIEWYFNGKMLNHGSRFKMTSEFGFVTMDMIEVYARDQGIYTCKAYNKAGEAFTSTTIFCSSKENIIESTQHPKGAEGLEQIQDLEDSLRKDGSKPEQPDLGIPPRFTTEFVNIADIGEGELAHFEANLIPVGDQSMVIEWFYNGKVLEASHRVRTIYAFGTVALEVLGTKIEDTGTYTCRATNKHGTAEISCNLECVDKPRGQKPRFTSHIQPLEGLKDGQSAHFECTLIPVNDPDLKVEWYHNGKLMRHSNRIKTVSDFGYVVLDISYLQDHDSGEYVCRAWNKYGEDFTRTTLNCGGRGGVFYDSLQPDSLQRIRELECPQGQQADTSAPLVAEPPKFITQIVDVTKLVEGQSAHFEARLTPITDPDLVVEWYFNGKKLPHGHRFRTFHDFGIVILDILYCYEENSGVYEARARNKYGEDVTRASLKCASKSSLILDSQLPRGMEGGLEKIANLEYSMVRTREETTEETKGKAPVFTVPLENIENLREGENAHFEARITPADDPKLKVEWYWNGRPLKAGSRFRTFCDFGFVILEISPVYPEDSGEYSCRAINEYGEAVTTATMKIQGKRSIIMESQLPKGMEGTIDRIAELEGLGSRSTEFVPDDDTGKPPEFITSPFDMVIGENALAHFECRLQPINDPSMRVDWFHNGKALWAGSRIKTINDFGFVILEIAGCYQRDSGLYTCKATNKHGEATVSCKLQVKGRQGIVMEPQLPSNFRTGTESLQKLEETMHKREELVTEDEQPNPPKFTEEIKDNLDVPEGGPIHFDCRVEPVGDPTMRIEWFYNGHVMATGSRVHQLNDFGFIALDVDYIYARDSGEYTCRATNKWGTATTSAKVTCKGKHNIVYESQLPEGMTSEKLKELERGRIPEAPKVVEEVFGPPKFTTQITSVTVDEAEAVRFECQVEPKTDPSLRVEWYRNGKPLPSGHRYRNIFDMGFVSLDILYVYGEDSGEYVCRAINNYGEDRTRATVSCKKLPTILLQNQVPRGMKRSDALTQMEATIKKYTSEVHLTEDDLFDPDRKQPPRFVTQIKEQLTLTEMAVTKFECQLAPVGDPNMKVEWFFNGKPLLHKNRFQPIYDFGYVAMNFGWVYPEDSGEYVCRATNLYGKDETRAIIKVSGKPGIVYDSQLPAHMQSIDRIREMEASWQVVPDEVDPDAKPRTKPVFVSKLEPQTVEEGDPARFCVRVTGHPRPRVMWLINGHTVVHGSRYKLTNDGMFHLDVPKTRQYDTGKVEVIARNSVGESIATTELKVVARSDDYRNVLKNSPRPWYDYELAAYQKERQENELEKVFDERKQVLSEQSSHTLKGVEHLKPKQYKPPTPDWQQNVKAKKSEDYYNKLQTLETEQLLKETNLRRDTHQYAIPGEKVVSSSQAKGMAQSYEENLQEKTSTTEVQAAPPKGIAQPSESSVHGREVHMNKQQQVQKEIQGDLEITRKITATETTEVEHKGTIQERVVQGPVKPAKAPVFTKKIQPCRVFENEQAKFEVEFEGEPNPTVKWYRESFPIQNSPDLQIHTFSGKSILIIRQVFVEDSAVFSCVAENRGGTAKCSANLVVEERRRAGKGGIQPPSFVTTIQSTTVATGQLARFDAKVTGTRPLDVYWLKNGMKIQPSIKFKMLEEDSVHTLLIIEPFAEDSGRYECVAVNAAGEARCDGDCIVQSPSKPEKPTTPGSEKAPHIVEQLKSQTVEEGSKVIFRCRVDGKPTPTARWMRGENFVKPSRYFQMSRQGEYYQLVISEAFPEDEGTYKCVAENKLGSIQTSAQLKVRPIENLDAPPTITALKDVSVTEGMPAQFKTTVTGKVKATSVQWFREGQLIPETPDFQMIFDGNSAVLLIGTTYEEDSGIFTVRVTSSTGQVESSAKLTVKKRRISAFQLRTIDSAEDESSSSGREDSAPESPHAFQPGQQPGQQFGQFLGVNGQGQHQGRSRQKKPKVRSKSLQPATKVIPWRKSSRPTRGRSLDKGVFLPGFKPEPVKSWTEETINLKATPIEKKKPAPKLEAAKVVLKSIKTERDQGIMSLGATLEQIIAGKTEKEAIPWITMREKLKAVESVQQQLNKFDLDEVYLQPLEGQIETEGQLPQQAQVEQVQRTKEIQRLKSMESVEIMEMTDQIDKLITQQQNAKDLIPWKEMRQQLKSVQRVTKQIDKFKIEEVELRHLQAQQAITEEYQTGTAEETVVMIDESSKGSISKVLRRDEQLQYEDQSNIYKQKFITTEDVNIMHVSEREKLEAQRLIREQQAVNWRQQQQRPQLQPLTSVEDTVISQTSERQKLVQQQSFIEEAQRQQFVQVEDSQMMSLEEYEHQKIINQRTQQEAFSWRQPREPQKFIQVEDSTLLHLQERHDTQEQQLLQQQPVMWDRGRKKPDQPQYVQPQEQRVKEEFVEKPKTYEEMHDELVEPTPIEQPQPVPVMWERGKKKPQPQEKTFEEAHDELVEPTPVQQPEPVPVMWERGKKKVAQQETVLSQEVVQTSQVVEQQIVEETKKTAVRRVIPPREPEQKVEQVTLKPTPRPRPKEAVKAEEIQLKPLRSTRPVPQPVEAEQKAYEEATDELTEEPIPQPQPVMWERGKKKPQKPQEEVTEIPKTLEIAVDTLEEEVPKPTEPQPQPVLWARGQKKPQKPDEQKQELPKSLEIAVDTIEEDLIKPVQPEPQPVLWERKKKKPQPQDVIEEKLDVAPTKTYEKAVDVLPDEPKVEEKPEPVLWQRGKKKIPKSEPTEEVHPDEVDAQIETVVKEDEMIVEEKRRIKKTKRPKSTKEVTEELFEEQPEEEISPEEEVPQKEVIEEIEEIVEEKRRLKKTKKPKLTQQVTEEETPHEEIIKESEEVVQEQEEIVEEKKKVKKVKKPKTVAEKQLKEEEIPTEETVEEEETAEDQQLVVEESKKVKKVKKPTGTVEKTDVEELPGEEVPVEEVPVEEVPEDVAPEEELIEEQEEIVDQDEIQEQKRKVKKAKKPKKTIEKTEIEIEEDQPEEEVLQEEIIGEQEEITERQRKVKSIKKPKKVVTEKTVDQTEQPEKPEESQAEEVKETVTEEPKKPKPAPEEAKVEQVEKISLKPAPRKQRLLPEKEQVEEVLLKPVKKIVAVSEAEQPETPETEFEVKEFAITTTEDILDVTKKRVKKKKPKTKVAAEESTEEPAEETEEFEEEATQPEEVQPVEEIPEEPQVKEVADERKTAPKPKPRKEEIIEKVEEVALKRVTRPKKELPQEATIEEVRLKPTQRTSIKPEEVKLEEVDLQHVEKKEDEIVQEEKRKTRKVKKPKHEDLPEIPDAEPTQLEEAEHIELEKQPKPEEDQPQVPWKRGEKKQPVEEVLEEKKWPSGKRRPLPEQQPEEVQLKPIPSKPIEEQQKPEKAIPGPQLVPEEKPESEEEELELEPLKLPEDKKPKEPKAKKEKKKKPKLKKATPSVDEVSEEVAEPFDEPIAEEDEVEEMPVDDVKVVAVSEDVLPEEEVVPTEETPEAKQKAHKKRTKRLKEASVEGQPQLLEAAIAEIEKVDEISQEISQKTITLLKKTEDTRPQFITTEQLIELDVEDVRRDLEMKVTSNIIKKEKRRVVLDDSQPLPELELITQKRIQEGIDKVADEELIEDQQLIQNQQETTTSEVIGQERKLVKKKKKEIKPPRITEKLRPRQCVPEEPTVLECKVEGVPFPEIKWYFNDILLFASEKYEITVMEQVAKLKIAKVTPSDVGVYTCEAKNEAGVATSRTNIILEKEQGVPPQFTKPLKIEFIEEKQPERLKVTVTCQVTGKPNPEVKWYRGIEEVIPSETVQMFYDEKTGDVALEVINPTPNEAVVYSVQAQNQFGRAIGNANILSRVDEVPREILKAPTVTPLSAVVVPTGGTLFFEAKYDGLPRPEVKWMRNGREIIENEETIIETTETTTTIKVVNMTRKRTGKYEVWAKNKVGEAKSSGSVVVSDQKPDEQIKPPRFIQPLEPKYFGEHEVAIIEAIVESEPLSSFQWFVHNEPIKSSNEVRIVSQANKSTLLIENFQSKFVGPFTCRAENVGGSVTSTATVNLIPQEEAEEFESPRFVEELVQPVEVMDGEALLLTCQVTGKPTPKVEWYHNAEKITENKETTISQDLQGVCQLQITEVFPENEGQYECVATNKIGKSVSKTNVKIQAFEYIPDSEITGLTGSEEDLLDRTLSIDEQAPKIIKKLPEKIEPKEGEQAKLEVKVVGKPKPKVKWLRDDEQIFASEEYQIENFEDGTSVLVINHVYPDDLGTISFEAYNPLGVAVTTALFAVEGIVGSKDYRKPEWVSQMEEMQVALKAAKCSPSLLNEMRDCRAALGETAKFSIQFAGNPIPDIQWYFNNVQLRASEKYRMVVQEQEATLEIMKITSEDCGYYNCKLINEIGMTMTRAKFDISSTSTIVEETKAKTTVKKKSGKKTMVKRSGASESQNVQKTEIRIIPTSAVETSMNVIKVKQPVSVLVEKSEISEVLVVKDREVADAEERSSQLIEEIEEEEEIEEKVQHDEEDEVEVQVEQKETYTSSKKIEITKTVELIRTKISEKIITIEDVQVLSHHEEVQWLLESIEAESFGQIGESALRDLATIGLLLRYGCEHYEITYMYEQNIFISLKKPESQSALVQLVEREGHEELISQILSESSNEDETILAATVGFKAFIRMIQTYEITIEIVIRKFVREDFISQDWKICGKERIVETSQIIESHEAITHVKIETATTKVEKLFKKQEQEHVQNLEQQEQVKIQVQTKQIAQMNTKIKKHKKHKQQEQEVSETTIQCEQKETLAHETSAELPQSETLEQIEESLSTYETLPIQNLSKDTLQTVAVSVTTELSTPSPTASRVQEEILPQKVLAINEEVLPLDEFGLRKESPRPKENKLTENIEVRLKHALNVSHAKTAESSKELPSKIPKSVKAQRKMKESRSLVVEAPNAEEAIEDLKPLKAVSQEVQSDILFSHEITEEQHQALETIEKLKPTSAIEDTVQQKLLSQEELIIAEVLPSETVGRDVTDVRPPGETISPRLTPNMSLCITECQPEDSIGEMQQAAKERMETPSMSVTESKAVGGQELEVLENVDHMPLITQPTKGLADYTIKAEEVPVQVQEIITFDSLERETVAKTQTAKSNALELFELSEGLVSSTADSHSPIAEDLPIFEKDVKEATIDMQMQHHVTTSETVSNENAVKDLKAVDTPKMAEGTLGQSSALTIGETQQMNLVETTVELIEPNVESTKPAKGALTEAYGTAESNEETLLESLGLVPDDNRKIEQGKVNISEGEYVAKVQTTTVTDTEGEFVSVAPKLVNPKFDFVEQSALQIKQDTTVEKEEILSSNIELAPQLATSNMFPAELKVTSIYEVQPGLTSSDIITEQTKSVSANQVFETMSIGVTSKPDMLESTSHIDAFQHPEFKTGDTILDENQQPLEVTNVQITESSTDIIDVLPNQKLTKAETVTDGFKYAEGLVVLPMESTIDKTEDTKPTAVNADISMHQQFGTDVREQEPLESTLTRTEDLKPQTQTTESQFGLLQSLETSSCVTLEGESVLSVKERHPEQSAAIGTSSALQVANITRPQHMESLDRLDEQKVPYYQANVNIGEITLPNVEKIDSFDVLSDLNTPDYNKSSKGRVQLIESTTSLKTTTAVVSESTEELKDLNITQPVHIKPKPYESDQKISISEQTNVLEHVSSLNPVLPALETIQSSIKSLHEINVRETDILEKEESLKDVDHISGRLAKIILDCTTGIAQVRQEETLEHEEDLKAPLIPLEKAIPASSELHRLPLTEYVQEQQGTSDMTDFKVSNKCASPNIDHLYETKSSEMIVYDSSINSVDSEFPAGIVPQKSLVPFRHTMVTENVAFNASENFEILSADQQIATNVQDSLSQSIIAEDQIAFETEQNLGLETTPTHKPKLLKDDQNLHAKLVDEATVYEAMGQEQKVDKYNIQQAEITHDLPQVYATDLQQTFEAEKEITTREQSYVAATTDIIPSRLGLAMTTKTHPVEGIDVLLSSPPKPSLAQTNYEETQHEVRVRETQAIEESEELTDGRLLPVSAVESIDSTFKVTSDSQQPPVFDKELSIPTVSPLEARAKPSLNLLQGTTTFDVIPLESSVLLKDTHVAVQKAQQEYVAQVESNKVHVQMDNLVMHKEDIFENAEIENFCKPITEGTQLETVVIEVVPIDNVGGIHLAPQPSTLLATLTSTDIVNQSHVIDTQVPLEMESEAQAPLDNIAQARIKSAEDHVHTNVSEVNVYEQTKAIQDQNKHGLFVKVSKNSDTSKAYLTTIQSTFLKEDILPKPNILQDTAQAAADELQSLVTEEVVSVSSIQETYELKIPLQKTANLTQQTPQNSVNVCQQLAYEETPDIAFEPHALTRATTSSVPTFLKPAENATVNIYENIEGHGDFKPGTVNLTSNSNLNSELVVSVVQEVTSVPSLGSLATVEPQELKAMPVTKSSTNLAYSEEVKGNKQEFTKIETVEEDDKQPETTVTVEELPYEEEKPEEIQELPEEVCVVETVTEDGKPKKKKIRTRVIKKVKGDKQEVTKIETVEEDDKQPETTVTVEEVPYEEEKPEEIQELPEEVRVVETVTEDGKPKKKKIRTRVIKKVKGDKQEVTKIETVEEDDKQPETTVTVEEVPYEEEKPEEIQELPEEVRVVETVTEDGKPKKKKIRTRFIKKVKGDKQEVTKIETVEEDDKQPETTVTVEEVPYEEEKPEEIQELPEEVRVVETVTEDGKPKKKKIRTRVIKKVKGDKQEVTKIETVEEDDKQPETTVTVEEVPYEEEKPEEIQELPEEVRVVETVTEDGKPKKKKIRTRVIKKVKGDKQEVTKIETVEEDDKQPETTVTVEEVPYEEEKPEEIQELPEEVRVVETVTEDGKPKKKKIRTRVIKKVKGDKQEVTKIETVEEDDKQPETTVTVEEVPYEEEKPEEIQELPEEVRVVETVTEDGKPKKKKIRTRVIKKVKGDKQEVTKIETAEEDDKQPETTVTVEEVPYEEEKPEEIQELPEEVRVVETVTEDGKPKKKKIRTRVIKKVKGDKQEVTKIETVEEDDKQPETTVTVEEVPYEEEKPEEIQELPEEVRVVETVTEDGKPKKKKIRTRVIKKVKGDKQEVTKIETVEEDDKQPETTVTVEEVPYEEEKPEEIQELPEEVRVVETVTEDGKPKKKKIRTRVIKKVKGDKQEVTKIETVEEDDKQPETTVTVEEVPYEEEKPEEIQELPEEVRVVETVTEDGKPKKKKIRTRVIKKVKGDKQEVTKIETVEENDKQPETTVTVEEVPYEEEKPEEIQELPEEVRVVETVTEDGKPKKKKIRTRVIKKVKGDKQEVTKIETVEEDDKQPKTTVTVEEVPYEEEKPEEIQELPEEVRVVETVTEDGKPKKKKIRTRVIKKVKGDNQEVTKIETVEEDDKQPETTVTVEEVPYEEEKPEEIQELPEEVRVVETVTEDGKPKKKKIRTRVIKKVKGDKQEVTKIETVEEDDKQPETTVTVEEVPYEEEKPEEIQELPEEVRVVETVTEDGKPKKKKIRTRVIKKVKGDMQEVTKIETVEEDDKQPETTVTVEEVPYEEEKPEEIQELPEEVRVVETVTEDGKPKKKKIRTRVIKKVKGDKQEVTKIETVEEDDKQPETTVTVEEVPYEEEKPEEIQELPEEVRVVETVTEDGKPKKKKIRTRVIKKVKGDKQEVTKIETVEEDDKQPETTVTVEEVPYEEEKPEEIQELPEEVRVVETVTEDGKPKKKKIRTRVIKKVKGDKQEVTKIETVEEDDKQPETTVTVEEVPYEEEKPEEIQELPEEVRVVETVTEDGKPKKKKIRTRVIKKVKGDKQEVTKIETVEEDDKQPETTVTVEEVPYEEEKPEEIQELPEEVRVVETVTEDGKPKKKKIRTRVIKKVKGDKQEVTKIETVEEDDKQPETTVTVEEVPYEEEKPEEIQELPEEVRVVETVTEDGKPKKKKIRTRVIKKVKGDKQEVTKIETVEEDDKQPETTVTVEEVPYEEEKPEEIQELPEEVRVVETVTEDGKPKKKKIRTRVIKKVKGDKQEVTKIETVEEDDKQPETTVTVEEVPYEEEKPEEIQELPEEVRVVETVTEDGKPKKKKIRTRVIKKVKGDKQEVTKIETVEEDDKQPETTVTVEEVPYEVEKPDEIQELPEEVRVVETVTEDGKPKKKKIRTRVIKKVKGDKQEVTKIETVEEDDKQPETTVTVEEVPYEEEKPEEIQELPEEVRVVETVTEDGKPKKKKIRTRVIKKVKGDKQEVTKIETVEEDDKQPETTVTVEEVPYEEEKPEEIQELPEEVRVVETVTEDGKPKKKKIRTRVIKKVKGDKQEVTKIETVEEDDKQPETTVTVEEVPYEEEKPEEIQELPEEVRVVETVTEDGKPKKKKIRTRVIKKVKGDKQEVTKIETVEEDDKQPETTVTVEEVPYEEEKPEEIQELPEEVRVVETVTEDGKPKKKKIRTRVIKKVKGDKQEVTKIETVEEDDKQPETTVTVEEVPYEEEKLEEIQELPEEVRVVETVTEDGKPKKKKIRTRVIKKVKGDKQEVTTIETVEEDDKKAETTVTVEETELSAPSVGKVQLKKRVIVQKPEDAVTVFELPERKSVILSEKEDGTPTKTVIKTRIIKKIQGPNMEVTKVQTVEEYEKAPQTIVSVEKFNTPFPELPEERLSEVVMLPDEVFESEAVDEEGRLKMIKTKKRIIRKPALDNTEEVTEIGIIEQDNVEPIYSVKIQERPLTESKPEDSKLIELPEHVTELNVILPDGKKKRRTVKSRAFKKSLDDDLDEVTTIHIIEEEDKEPLTKVNIEVVPSDEISITPIPIEELPEETVFTEELDENKKPKKKTTKTRTFKKRGPDDDEYFQIQTIDEEGKEPISLIRVVSDENIADIIDISKLDDEKVLKHKQKPHKHKDQYYKEYTITEPEEASADALQKPTKDKTPKQKKTLETPIEEVDETVIIDEGTGEQTDQIAIKRKPRKVQGNVQVEAVDEKPIEKKEKAKKKKVVKTKRDEMDDYIQFLIHQEIPKTVLQPYQRTEMELPQRARRDSSFKQPVKLTPMKIEKVEFKKPKMVEISSVVEFPQMLKLKAPKQRPQEEKKKKNEASFKNKKLKSWIRFVPYAPYCFPYVVTELETNREVGELSRNVDEAEEVLKLRPKKFKHSKPEKAELEEADLGAYESDHSDKSNKELLHPKYKRGKKEKIETPDESRKLKFGKGKVPQNEEASEEVNLKPVKLDIAEIEDAEMPVRTQEEEVVKKKKPKKSSKPEEGLQFEPIEFEEMERTSDIREESDTSVSVDTSTQEKPIYKKKKKVTPSPQKNQYKILPGQPREFEETPEDDLNLRKRQGERPDDDKADTKLKPFYKFEVLDLEPEGVQAETVPLSETIAKEPKKKRKIKVKTEQEDNTIEIVPLSPEDNDEQIFEITVTSSEIPQGDAKAKTIGKKKVKRMNKQELDDFVTELQEEPNQEVYETRMSDFYEVKLTELPSEMDSDKPTKRILRHEKGDEVQVLEIVESVVAPGEEPFYEINVISSANTEGDSEEITTDKIKKKSRKIKKDDLDAYIQQLINAEIPVTELEKYEKIDVDGKAKKPKKLKAKTKKPIIDEGETLQVGVTEHEPTKKLKTKKPEEKKNVIEKELAEHEAVPEYDEFLINKTESERPQEKRVEETEKDIVPIVDKVLADLNDCLPFVVVEEDLKDMPLATDVIALEDEKIIRKRKVRAKKDSKQYEIEIIETEKPGDIPDEARVIVITTEVSGDTIDGPAPSTTEAPKKSVRKVKKEKLKEFIVNIVEEAPLDHVSEIYEDVLRTPFRESSEKEDIPSFTTTVVEDEIVNPVLPEKIKTVDDVRVPKDKKKKIDNQKKIKISEFEPTPTSEDSTIEEYTPKLSEHDEDLQTDEYSVDVKDSLPKSKKKSTKKQKKESLPGPISLYTIRIEETTPEPITEKIYEDGKEVVRVINKRRIKKKAGPKEYLIEVIETYEDNNPEADVVIRTIETTPSIDSKPQEDHKIQVVQEKKPKTESLDNYIQKLIDQEIPQVDHKEFKATVLETSPESKKAKKIKKHHKKTTEVIDGIPITVIEVTIQETETDDEDFKPDEVTLKEIDHENAEEAPKVLKSKVSEEKPKSKKEKSLEFKIAEEDKPKPVLEDISEDVQVVQIIEEDGTPKQVEIKKKKVSRKHGPKEQVFEITETKAIDEPLSEVTVVEITDEQPQEEVLPAQEKKPIKKQKKLKPEDVNTYVVKVLEELTEPTQFETIPEDADDKPQPVIEDISENVQVVQIIEEDGTPKQVEIKKKKVSPKHGPKEQVFEITETRPSDEPLAEVTIVELTEEGLNKDIVIPQEKKTVKKPKKLKPEDIQSYVIRVLEEFNEPQWPASTEKPIIEDIAESIEIVPVTEEDGITKEVEVKKKKVSRKQGTKNQVFEIIETKTSDEPLAEVTILELSGDKSQEVTILPKEKKPIKKTIKLKPEDVESYVVNVLEEFCEPQSFESPEPTEGEAHETKTKTKKPKKPIVKAPENVILIEEMAPETVIENIVNEIGEEVKQVKTTKKLKKKEGPKEYLIEIKETYEENKPEGDIEITTTELVPEGSPDASDDQPVIVVQKIKKKKPVKDDLDKYIQQLIEQEITKTPLEEYEPTEMDSKKKPKKKVKSHNKKTIEVIDGLPVTIHEFNVEDIVSEPEDMETPKTLLDEIKEIPQLPDDSSKYLVNISDEFGEADKPIKQPTQDQPIKKEKPLKKKKDVEYPVSLEAFDHTVKVVSEPTLEGTVKEVTVKKRKVSRRKGSKDHIFEITETTSEDRPTAEVTVVELSSDEVLDSEEKPKHERKIVKKPKQLKKDDVEEYIINIIEEFIQPIPVGLVEDEVEKVQKEETKKPKKSPITYIATEQEDNDNNYDALVKEDLDQPIERALEKPSSPLEYTISVEEDSVGEEQKQPKPKKISKPKSIKQPSVDKSPDYLVNVISEESIIDEPIPEDYVVTEAAEEKPSEEPTFKVEELETEAVEKEVTDDDKGETTKQSVTKRKIKKLVGPKEEIIEIVETKTGDTPEYEVIVTTEEVQEKSKEAPEEKKAKTVRKAKKIPKDDLQDYIQKLIEQDIPKTELEKYEKIDLDEPVKMKRKPIKKVKQSEEQPKEETEEPIEDKPVEKISEYSEVDSDEPKLTVAVKEFIPEKPEEKPFEIVVLEETVESKREPDEEGKVREKVVKTKKIKQNRGSVEVVHDIVEEIDTDTNESVITVTTTVPTETPDQDQPSVKQKRTKKIKKDEVEDFVKRVIEEEAPQPEGSVDLVVIEDFVPKPSSEKRKKKPIKDKHTSVEEETPHEDEVLLIESVPEDSPLSDDLITVVDSVPIEEEPENKVNQIEDTKKPEKKKKPKPSAKILEENVPEDTVEKPLEALHTDSDLEKPDVQEFSISIKEEEQKHTHPEKKKSSKISSEQPKQPSTEQYEISVTEHDLKPEEEKPFTVQVIQSETNVEETKDDTGKVHKQVTTKRMLRRPAGEGEIEIIEVVRDDQPEAEITIVEYEPEPVNQDEKPKEPKKKTRKVKKDDIHDYIQKLIELETPKTELEKYEKIEFEPIVKDKPLDSPIDVLDESPKEVQKKDKKSRSTKVPNEETPVQEQYAKVNVVEEEAPEQPEIPVQILEVKPVEVDVKEVITEDGKPVQEKTTKRVLKKIGPEEQTTFKITMIESEDNDSVTVIVDEEPEIASPQSIEEHPEQSKEKLAPKPKKTVRKVKKDDLSDYVKKLIEEEIPKVDLEKYEKVEMPEKPVKLTVSDSIPEEPKPDKSQPISVLPDTTKPKKTKTPKTPKTEDTDQQVPDEPTETTVDTTDIPELTPTQTAQPEDTATAQITPSAQEEKSTQDDTKDTIQKTVKHKKTKPDTQKSVETSELPEVHKDYQISIIHEELVEEEQPEKILEVRVIDEVAEVEESQPIVEEVEDEEPQPATEETVEDVTKPKSKKKKVVKKKTDDHDELIKKMLEQEIEKTELEKYEKIEFDVPKKLKPEFAALEPIKIERKEQKPTKVTILDATDVPKTVKLKPSKRKEKPAEELTVQLPKFRLKARMVLVEYPPAPLIPKTTDIGAIKDNGELSRNIEEAEEILKFKPHKTKKIKKIKDDLEKVELEKYEKYISSEEEPEEKTPYKKPEKAPKPEEKQEDVKLKLGKGKKKPKEEEAPENVTLKNIPQKPQEVEEEVELKQKPKEVEIVEEQTKKPKDGEFVVEPFEPSEFDRPEYVPDELEQIEHPEIPEKVKKPSKTKYKPKDKSKSEPETIVSEIVAGVPKEEEAIPEQDVKFRKPERDAPEETDSEIKLRPVPQASKDENPDEQALVTPKAEEPIPQEIEDKAIDDEKKPKKSKPKKVQPKEQEIAKEEPEEFEVSVKEEEALVDKPIEIEKPKDVKVKEKKPKEAPVSEVVVIEEEPKPEEVPEEIPVEYKITTTVLEPEDAPKEHQVKVIDFDERQETTEEVIEEKVVTRKKKPKPQQPEEFEVTLKEPKEEQIQPDVVSAEISLPIEEPEQKPEQYEVELKITQTTPEEPNDVQIAVKEKVKTKPVKKVKEDKIVVVEAEEEKQPVEETIVEVEKQEEKKKSEKPKSYEFKISETQSIEEKPIEVAEEAPEETPKVVEKKVAEKFDSYEFTLKETDEEKVITVDDQPEEEAPVEVVFKKKPKEPEAVEAEFVMTEPKIVEETSVETAIKQKKTKKPKKDEEEAQLAIKVVESEAPVAEEVFSEAPESKIVEEEVIAEEKPKEFTIRVSESEPKPEEPSVEQFTVKKRKPSVTFADEPATEIVIKESKPAEVVTEDAHIKTKKPKKKVTDVEAEELKIKITEEVPQEIPILEEVSEEEVITETKKTAPVVEEKTYKIGIKETEPEKPAEAIVEEEEPVVTEPIEEAPKPEVFEEHKVRVIEETPRELVEEVIEEEVKVIRRKKPKPEIKEEPEAEVTVSTPKPVEEVEATSSIAVIPEQPTEEEAADLKITIIEEETPPQELVQEIEEIEIVEEPKAPEEQPTDFTFATKDSEKKPTVEELPEEQVTIQKKKKKAPVPEVVEEPEAEFLVKPKTPVQEVTEEAKITKSKKPVKEEEAAAELKVTITEEIPTEPEVQEIIEEIEEIEEEKPAEYVIEVKESQPEAVEDKEVSLPKKKPKAPIVEEPEAEITLKPKVKSEEVQEEAKIVKKKPKKIDEVAVADELTVKVEEEVVPEPIVEEEVIEEFEIKKKPKEPEPEDIVDAAIVKLKKPEPVDADEVVAEVTLKPKAKTEVTEEEFSVDVKLPKEKKERPVEIEEEEIIEEAVVIRKKPKKPFEPTVEDLEETEFSLSFKKPHTINEGVEEAATVLKKRPVKPTTLDEAAAELSIKRQEEEYEEGEDIEEFVVSQQRKPKPLQITEEDEEAYTVKKLKRRKQVDIPEYADVENVTFRARSTKTKEDVDQEFNIALDSYAEEEISMSGKVKLKKPIKKTFSEAADEAKIKIIQDFDDGEEPIIEEIRDDEDTIDEVEEPEEYFVEELPPDEVDFKLKPKKHPKPAYSVQDEEEEQFLIGIRHPKRDSVTYDEDSLTFKKKRKVVQQLFNEDGASLNITREMNVEESENLNIMYSICNYIADNNEAINLVEGEKVTVVGRHSSEWWYVKKSTTEEEGWVPAQYLMEPEEYAQYVQNKLHEKIDKLPVFERPGPEDKPIAPRFIEKLQPIHTPDGYTVQFECKVEGNPRPQIAWFRETAIIKPSQDFQMFYDDDNVATLIIREVFPEDAGQFTVVAKNAAGFTSSTTELIVESPLSDHGSDATALSRRSMSRESSLADILEGIPPTFSKKPKAQYVDENTNVILECRLVAVPEPDIVWTFNGEDIDEEEIKNVRIVTESDMHMYCSVVHISKVKKSQEGTYEVIATNREGEARLPITLKVRTTDKEAPQILEPLRNMVIREGESVVLSTQIVGNPPPKVTWYKDGKPVKNAKSDKDLHTLTLITPQKSEKGEYTVKAVNPLGSVETTANLTIEEPAGGNAEPPLFVERFEEQNVPQKGEIRLPAKVSGNPVPEVQWLFNNTPLFPSERIQQVYDGENIELIIKDANPETDSGDYKCIASNPIGKTSHGARVIVEVDEVTFTKKLKKTITIEEVQSLTLECETSHVVTTKWFFNGKELSGMDHRVVVEDGKTHKLVIRNTNLRDSGTYTCKVKKQETQSTVEVLQRKPDFIKVLEDYEVTEKDTAILDVELTTEATEVTWYKDGEKITPENKNVEFIKDGKARRLVIRDVTIHDEGQYTCKIEGQECSCELVVIELPPEIVEPLNDVAVTKGENAVFEVELSKGDALVKWFKNGKEIVFNERIQLAIDGKKQSLRIVKAKPEDVGEYSVQVGEQTSKAKLTVEEPLVDFVIRLPDITLATKTTDAEFTVQLSQPDVEVTWCKKGKPIKPNQKHEVFVEGTVRRLVIHDASDEDAGEISCVAENVTSSTKLCVEELKLPPVITSDKDQTIKVKENDDVTFTVKYTGVPTPEACWTTRKVVIPKSKRTIPTIDEQSAKLTIKKVVDDDEGEYTVKLVNPVGEAEASLHLVIMRKPTAPGTPQPLEIMHDSITLYWKAPEDDGKSEIIEYILEYQDVKEEKWTEIRKIKDTTYTISKLKIDTEYVFRSIAVNEVGPSPPSPLSPPIRLVPKVETKAPSVQEPLQDVVSELDKEVTLSCVFGGIPEPKVTWKKNGQVFESRSIRYENRVAKYTIEKTTIETEATYTCVATNEKGSAETSCRLKLQQKPVLEVEDKYLTQKLRTGSILTIPATVRGYPQPTVTWHKETIEQKTTKSVTIETTETTSTYTVKKVTREQSGKYKVTATNESGTTYVECTVQVIDKPSRPQSLEIKDIKKDSIVLEWTPPVDDGGLDIEKYTLEKCDVQNNVWMKVSDFNKDIKSYAVQKLSMNAQYMFRVVAANPIGESEPTESDPVTITKKFEKPSPPRGPTTVSGMNDTSFNLAWEPSETDGGSKIIEYIVEIREETETTYRSVGVTLGTVTNIHVEKVVRNKGYFFRIYARNEVGTSEAFETTEKIVLGRKITPPSPPQNLRAPDVTSRSVTLDWEVPARNGGSEITGYCVEKRSSTSTNWTKVITLDAHQLHYTIDNLKEKCEYWFRVSAENEVGLGAPAVTESISLKTHASEFILVVRNCGSYTEFGFLKAVPSPPTGPLEARVLAANAHIFEWGLPESDGGAPLLGYHIAIRDMKKTMWIEVGRVPAGVLKFQIRDLQENHEYMIRIFAKNEIGLSEPLESEEPYKAMTAGHESLPDEPRTEMSSCNTSSWLRDHHMDADIHSYARGRLLQRDEYFFRLWAELPKSKKKKSSK.

Residues 1–31 show a composition bias toward low complexity; that stretch reads MQRQNPNPYQQQNQQHQQVQQFSSQEYSHSS. The segment at 1–69 is disordered; sequence MQRQNPNPYQ…QHHGGSIGGA (69 aa). Residues 32–47 are compositionally biased toward basic and acidic residues; the sequence is QEQHQEQRISRTEQHV. A compositionally biased stretch (low complexity) spans 48-62; sequence QRSQVTTQRQVQQHH. Ig-like domains are found at residues 86–177, 255–343, 372–461, 471–559, 618–708, 751–842, 890–981, 1024–1115, 1158–1249, 1291–1381, 1424–1515, 1558–1643, 1691–1781, 1824–1917, 1958–2050, 2089–2180, and 2222–2313; these read PPVF…VYIQ, PQIS…AVLA, PAFV…AQLN, PQFV…ARLY, PQFI…AILS, PQFI…SSIR, PQFK…AQLT, PRFL…ATMI, PVFV…ACVR, PQFT…CSVR, PRFL…VELQ, PVFT…EAIT, PVFT…ASLI, PVFV…LNVT, PQFG…VNVT, PIFL…CNVR, and PHFT…TNLR. A disordered region spans residues 236-266; the sequence is EQDSQLSQELDRNQGPAQAPQISQKPRSSKL. C393 and C445 form a disulfide bridge. Disulfide bonds link C1312-C1365, C1446-C1499, and C1579-C1632. C1846 and C1899 are disulfide-bonded. A disulfide bridge connects residues C2111 and C2164. A compositionally biased stretch (basic and acidic residues) spans 2338–2347; that stretch reads STAPHQRQEP. Positions 2338–2357 are disordered; sequence STAPHQRQEPETPGTRQRPV. 3 Ig-like domains span residues 2356 to 2449, 2488 to 2581, and 2622 to 2715; these read PVFT…MRVV, PIFT…MKVK, and PVFT…LKIE. The segment at 2731-2750 is disordered; the sequence is PRIGELEAPKEGRPEAPEPT. The segment covering 2734–2746 has biased composition (basic and acidic residues); sequence GELEAPKEGRPEA. Ig-like domains are found at residues 2754–2844, 2891–2983, 3029–3116, 3130–3221, 3263–3354, 3401–3494, 3539–3625, 3676–3767, and 3811–3901; these read PVFI…GTLK, PPVW…TTIF, PRFT…AEIS, PRFT…TTLN, PKFI…ASLK, PVFT…MKIQ, PEFI…ATVS, PKFT…AKVT, and PKFT…ATVS. C2775 and C2828 are oxidised to a cystine. Cysteines 3152 and 3205 form a disulfide. 3 cysteine pairs are disulfide-bonded: C3560-C3613, C3698-C3751, and C3832-C3885. One copy of the TPR 1 repeat lies at 3910–3944; that stretch reads LQNQVPRGMKRSDALTQMEATIKKYTSEVHLTEDD. 2 Ig-like domains span residues 3954-4047 and 4092-4181; these read PRFV…IKVS and PVFV…LKVV. A disulfide bridge links C3976 with C4029. The stretch at 4204 to 4229 forms a coiled coil; that stretch reads AAYQKERQENELEKVFDERKQVLSEQ. Disordered stretches follow at residues 4226 to 4254 and 4299 to 4336; these read LSEQ…DWQQ and SSQA…PSES. The segment covering 4309–4322 has biased composition (polar residues); the sequence is YEENLQEKTSTTEV. 4 Ig-like domains span residues 4394 to 4482, 4497 to 4585, 4604 to 4692, and 4703 to 4791; these read PVFT…ANLV, PSFV…GDCI, PHIV…AQLK, and PTIT…AKLT. A TPR 2 repeat occupies 4403 to 4438; the sequence is CRVFENEQAKFEVEFEGEPNPTVKWYRESFPIQNSP. Cysteines 4625 and 4676 form a disulfide. Disordered stretches follow at residues 4803 to 4891, 5318 to 5368, 5413 to 5648, 5667 to 5701, 5718 to 5748, 5775 to 5982, 6034 to 6350, and 6364 to 6393; these read RTID…DKGV, DELV…QPEP, RVIP…EVDA, IKKT…VPQK, KKTK…EVVQ, KEEE…QRLL, KRVK…MPVD, and EEEV…EASV. Positions 4822–4841 are enriched in low complexity; sequence PESPHAFQPGQQPGQQFGQF. A compositionally biased stretch (basic residues) spans 4852–4863; that stretch reads GRSRQKKPKVRS. 5 stretches are compositionally biased toward basic and acidic residues: residues 5344-5357, 5436-5447, 5541-5552, 5591-5621, and 5633-5645; these read QPQE…HDEL, RPKEAVKAEEIQ, QKPDEQKQELPK, IEEK…EKPE, and PKSE…HPDE. One copy of the TPR 3 repeat lies at 5575–5613; it reads PVLWERKKKKPQPQDVIEEKLDVAPTKTYEKAVDVLPDE. The span at 5681–5697 shows a compositional bias: acidic residues; sequence EELFEEQPEEEISPEEE. Acidic residues-rich tracts occupy residues 5779-5792 and 5818-5860; these read IPTE…ETAE and DVEE…QDEI. Basic residues predominate over residues 5865-5874; the sequence is RKVKKAKKPK. Residues 5883-5904 show a composition bias toward acidic residues; it reads EIEEDQPEEEVLQEEIIGEQEE. A compositionally biased stretch (basic residues) spans 5910 to 5920; sequence RKVKSIKKPKK. Residues 5921–5971 are compositionally biased toward basic and acidic residues; that stretch reads VVTEKTVDQTEQPEKPEESQAEEVKETVTEEPKKPKPAPEEAKVEQVEKIS. Residues 6034–6043 show a composition bias toward basic residues; it reads KRVKKKKPKT. Over residues 6049-6079 the composition is skewed to acidic residues; the sequence is ESTEEPAEETEEFEEEATQPEEVQPVEEIPE. Composition is skewed to basic and acidic residues over residues 6081–6092, 6099–6133, 6141–6169, 6195–6209, 6217–6234, and 6259–6268; these read PQVKEVADERKT, RKEE…EVRL, IKPE…EEKR, EAEH…KPEE, KRGE…EKKW, and PIEEQQKPEK. Residues 6281–6290 are compositionally biased toward acidic residues; the sequence is PESEEEELEL. A compositionally biased stretch (basic and acidic residues) spans 6291 to 6306; the sequence is EPLKLPEDKKPKEPKA. Over residues 6307–6318 the composition is skewed to basic residues; sequence KKEKKKKPKLKK. Acidic residues-rich tracts occupy residues 6325-6349 and 6364-6373; these read EVSE…EMPV and EEEVVPTEET. Ig-like domains lie at 6536-6624, 6633-6728, 6741-6830, 6841-6929, 6942-7034, 7066-7151, and 7189-7279; these read PRIT…TNII, PQFT…NILS, PTVT…VVVS, PRFI…ATVN, PRFV…VKIQ, PKII…VAVT, and PSLL…FDIS. A disulfide bond links C6557 and C6608. Residues C6964 and C7016 are joined by a disulfide bond. Positions 7621-7663 form a coiled coil; the sequence is KIQVQTKQIAQMNTKIKKHKKHKQQEQEVSETTIQCEQKETLA. 29 disordered regions span residues 7773–7793, 9414–9440, 9485–9510, 9556–9582, 9627–9652, 9698–9724, 9769–9796, 9838–9865, 9911–9937, 9982–10008, 10053–10080, 10125–10149, 10195–10220, 10266–10291, 10337–10364, 10408–10433, 10479–10504, 10550–10576, 10621–10648, 10692–10717, 10763–10788, 10834–10860, 10905–10932, 11047–11073, 11118–11143, 11189–11216, 11260–11286, 11679–11703, and 11767–11795; these read AKTA…VKAQ, EEDD…EEIQ, EEDD…PEEI, EEDD…EIQE, TAEE…PEEI, ENDK…PEEI, EELD…RGPD, and TEPE…LETP. Positions 7774–7783 are enriched in basic and acidic residues; sequence KTAESSKELP. 26 stretches are compositionally biased toward acidic residues: residues 9429–9440, 9500–9510, 9571–9582, 9642–9652, 9713–9724, 9784–9796, 9855–9865, 9926–9937, 9997–10008, 10068–10080, 10139–10149, 10210–10220, 10281–10291, 10352–10364, 10423–10433, 10494–10504, 10565–10576, 10636–10648, 10707–10717, 10778–10788, 10849–10860, 10920–10932, 11062–11073, 11133–11143, 11204–11216, and 11275–11286; these read VPYEEEKPEEIQ, VPYEEEKPEEI, and VPYE…EIQE. Basic residues predominate over residues 11686-11699; sequence KPKKKTTKTRTFKK. The segment covering 11780–11792 has biased composition (basic and acidic residues); that stretch reads PTKDKTPKQKKTL. The stretch at 11872–11905 is one TPR 4 repeat; the sequence is KTVLQPYQRTEMELPQRARRDSSFKQPVKLTPMK. Disordered stretches follow at residues 12003-12201, 12451-12471, 12685-12767, 12943-12971, 13131-13154, 13325-13349, 13471-13492, 13554-13576, 13702-13792, 13891-13914, 13951-13994, 14073-14094, 14109-14322, 14354-14377, 14414-14448, 14533-14566, 14583-14720, and 14756-14789; these read FKHS…ADTK, TLQV…KKPE, TVDD…LPGP, IDHE…KEKS, IKKK…ETRP, QSFE…KPKK, EEYE…KSHN, EADK…PLKK, KVQK…KSPD, EEVQ…KAKK, MKRK…DEPK, TTVP…RTKK, EEEA…QVTT, EYEP…RKVK, PLDS…ETPV, EPEI…KVKK, KVDL…SELP, and VEES…KSKK. 6 stretches are compositionally biased toward basic and acidic residues: residues 12022–12035, 12044–12054, 12124–12134, 12183–12201, 12457–12471, and 12685–12709; these read ESDH…ELLH, EKIETPDESRK, MERTSDIREES, LNLR…ADTK, TEHE…KKPE, and TVDD…KISE. A compositionally biased stretch (acidic residues) spans 12731 to 12741; the sequence is HDEDLQTDEYS. Basic residues predominate over residues 12750–12760; the sequence is KSKKKSTKKQK. The segment covering 13141–13154 has biased composition (basic and acidic residues); sequence GPKEQVFEITETRP. Over residues 13482-13492 the composition is skewed to basic residues; that stretch reads KKPKKKVKSHN. One copy of the TPR 5 repeat lies at 13566–13599; that stretch reads QPIKKEKPLKKKKDVEYPVSLEAFDHTVKVVSEP. Residues 13733–13747 show a composition bias toward basic and acidic residues; sequence LVKEDLDQPIERALE. The span at 13771–13781 shows a compositional bias: basic residues; the sequence is PKPKKISKPKS. Basic and acidic residues-rich tracts occupy residues 13893 to 13906 and 13975 to 13984; these read VQEK…EKKA and EDKPVEKISE. A compositionally biased stretch (basic and acidic residues) spans 14221-14240; it reads TVEKPLEALHTDSDLEKPDV. The segment covering 14264–14274 has biased composition (low complexity); sequence KISSEQPKQPS. Residues 14282–14294 are compositionally biased toward basic and acidic residues; that stretch reads VTEHDLKPEEEKP. A compositionally biased stretch (basic and acidic residues) spans 14542–14554; that stretch reads IEEHPEQSKEKLA. Over residues 14555-14564 the composition is skewed to basic residues; that stretch reads PKPKKTVRKV. Basic and acidic residues predominate over residues 14583–14599; that stretch reads KVDLEKYEKVEMPEKPV. Low complexity predominate over residues 14652–14662; sequence ETTVDTTDIPE. The span at 14664–14683 shows a compositional bias: polar residues; that stretch reads TPTQTAQPEDTATAQITPSA. Residues 14684–14697 are compositionally biased toward basic and acidic residues; it reads QEEKSTQDDTKDTI. The span at 14756–14771 shows a compositional bias: acidic residues; the sequence is VEESQPIVEEVEDEEP. A TPR 6 repeat occupies 14904-14936; it reads IPKTTDIGAIKDNGELSRNIEEAEEILKFKPHK. 8 disordered regions span residues 14956–15208, 15301–15329, 15425–15448, 15578–15597, 15697–15722, 15825–15876, 15951–15973, and 16181–16206; these read EKYI…VSVK, TRKK…IQPD, ISET…ETPK, IRVS…QFTV, EKPA…PKPE, EEPK…VEEP, ESQP…KAPI, and QEEE…KPLQ. 10 stretches are compositionally biased toward basic and acidic residues: residues 14967–14989, 15024–15046, 15069–15080, 15088–15097, 15109–15139, 15169–15179, 15189–15198, 15316–15325, 15425–15437, and 15578–15589; these read EKTP…DVKL, ELKQ…KDGE, QIEHPEIPEKVK, KPKDKSKSEP, PKEE…EIKL, IEDKAIDDEKK, QPKEQEIAKE, VTLKEPKEEQ, ISET…KPIE, and IRVSESEPKPEE. The segment covering 15703-15716 has biased composition (acidic residues); that stretch reads IVEEEEPVVTEPIE. Residues 15951–15964 are compositionally biased toward basic and acidic residues; the sequence is ESQPEAVEDKEVSL. Over residues 16183 to 16193 the composition is skewed to acidic residues; that stretch reads EEYEEGEDIEE. Residues 16409–16470 enclose the SH3 domain; sequence ENLNIMYSIC…PAQYLMEPEE (62 aa). 9 consecutive Ig-like domains span residues 16501–16590, 16625–16719, 16728–16811, 16822–16916, 16919–17001, 17007–17091, 17097–17180, 17184–17270, and 17277–17363; these read PRFI…TELI, PTFS…ITLK, PQIL…ANLT, PPLF…VEVD, TFTK…STVE, PDFI…CELV, PEIV…AKLT, PLVD…TKLC, and PPVI…AEAS. The cysteines at positions 16940 and 16989 are disulfide-linked. The 94-residue stretch at 17374–17467 folds into the Fibronectin type-III 1 domain; sequence APGTPQPLEI…LSPPIRLVPK (94 aa). Ig-like domains follow at residues 17473–17558 and 17563–17653; these read PSVQ…CRLK and PVLE…CTVQ. C17494 and C17542 form a disulfide bridge. 4 consecutive Fibronectin type-III domains span residues 17660–17755, 17760–17861, 17862–17958, and 17982–18078; these read RPQS…TKKF, PPRG…TPPS, PPQN…THAS, and PPTG…AMTA. A TPR 7 repeat occupies 17694–17728; that stretch reads LEKCDVQNNVWMKVSDFNKDIKSYAVQKLSMNAQY. The interval 17741-17771 is disordered; sequence SEPTESDPVTITKKFEKPSPPRGPTTVSGMN.

Belongs to the protein kinase superfamily. CAMK Ser/Thr protein kinase family. As to quaternary structure, interacts with Msp300; this interaction mediates the recruitment of Msp300 to the Z-disks. As to expression, expressed in the mesoderm at stage 11, several hours before myoblast fusion, and persists in most muscle cells, somatic, visceral and pharyngeal muscles and their precursors, until the third instar. Isoform A: Expressed in the indirect flight muscle (at protein level).

It is found in the cytoplasm. The protein localises to the nucleus. It localises to the chromosome. The protein resides in the myofibril. Its subcellular location is the sarcomere. It is found in the z line. In terms of biological role, key component in the assembly and functioning of adult and embryonic striated muscles and muscle tendons. By providing connections at the level of individual microfilaments, it contributes to the fine balance of forces between the two halves of the sarcomere. The size and extensibility of the cross-links are the main determinants of sarcomere extensibility properties of muscle. In non-muscle cells, seems to play a role in chromosome condensation and chromosome segregation during mitosis. Might link the lamina network to chromatin or nuclear actin, or both during interphase. The sequence is that of Titin (sls) from Drosophila melanogaster (Fruit fly).